Reading from the N-terminus, the 128-residue chain is Large ribosomal subunit protein bL17 (128 aa).

This sequence belongs to the bacterial ribosomal protein bL17 family. Part of the 50S ribosomal subunit. Contacts protein L32.

The protein is Large ribosomal subunit protein bL17 of Erwinia tasmaniensis (strain DSM 17950 / CFBP 7177 / CIP 109463 / NCPPB 4357 / Et1/99).